The chain runs to 69 residues: Large ribosomal subunit protein eL38z/eL38y (69 aa).

This sequence belongs to the eukaryotic ribosomal protein eL38 family.

In Arabidopsis thaliana (Mouse-ear cress), this protein is Large ribosomal subunit protein eL38z/eL38y (RPL38A).